The sequence spans 120 residues: Seripauperin-20 (120 aa).

The chain crosses the membrane as a helical span at residues 7 to 25; that stretch reads IAAGVAAIAAGASATTTLA.

The protein belongs to the SRP1/TIP1 family. Seripauperin subfamily.

The protein localises to the membrane. This is Seripauperin-20 (PAU20) from Saccharomyces cerevisiae (strain ATCC 204508 / S288c) (Baker's yeast).